The sequence spans 254 residues: MARNIQSLERAAAMLRLLAGGERRLGLSDIASSLGLAKGTAHGILRTLQQEGFVEQDDASGRYQLGAELLRLGTTYLDVHELRARALVWTDDLARSSGESVHLGVLHQQGVLIVHHVFRPDDSRQVLEIGAMQPLHSTALGKVLSAYDPVAHSEALEADRKAFTDRTVCEPDSFEHVLDITRARGYAADVEETWEGIASIAAPIHDRRRMPVGAVGITGAVERLCREGELRPELVAAVRDCARAVSRDLGAGRF.

Residues 5 to 67 (IQSLERAAAM…DASGRYQLGA (63 aa)) enclose the HTH iclR-type domain. The segment at residues 27-46 (LSDIASSLGLAKGTAHGILR) is a DNA-binding region (H-T-H motif). Residues 82 to 251 (LRARALVWTD…ARAVSRDLGA (170 aa)) form the IclR-ED domain.

Functionally, may be an activator protein for the gylABX operon. This Streptomyces coelicolor (strain ATCC BAA-471 / A3(2) / M145) protein is Glycerol operon regulatory protein (gylR).